A 262-amino-acid chain; its full sequence is Acyl-[acyl-carrier-protein]--UDP-N-acetylglucosamine O-acyltransferase (262 aa).

The protein belongs to the transferase hexapeptide repeat family. LpxA subfamily. As to quaternary structure, homotrimer.

The protein localises to the cytoplasm. The enzyme catalyses a (3R)-hydroxyacyl-[ACP] + UDP-N-acetyl-alpha-D-glucosamine = a UDP-3-O-[(3R)-3-hydroxyacyl]-N-acetyl-alpha-D-glucosamine + holo-[ACP]. Its pathway is glycolipid biosynthesis; lipid IV(A) biosynthesis; lipid IV(A) from (3R)-3-hydroxytetradecanoyl-[acyl-carrier-protein] and UDP-N-acetyl-alpha-D-glucosamine: step 1/6. Its function is as follows. Involved in the biosynthesis of lipid A, a phosphorylated glycolipid that anchors the lipopolysaccharide to the outer membrane of the cell. The polypeptide is Acyl-[acyl-carrier-protein]--UDP-N-acetylglucosamine O-acyltransferase (Salmonella paratyphi B (strain ATCC BAA-1250 / SPB7)).